Reading from the N-terminus, the 106-residue chain is Cytochrome c3 (106 aa).

Residues H26, H29, C34, C37, H38, H39, C50, C55, H56, H75, C82, C85, H86, C98, C101, and H102 each contribute to the heme c site.

In terms of processing, binds 4 heme c groups per subunit.

In terms of biological role, participates in sulfate respiration coupled with phosphorylation by transferring electrons from the enzyme dehydrogenase to ferredoxin. The protein is Cytochrome c3 of Maridesulfovibrio salexigens (Desulfovibrio salexigens).